A 123-amino-acid polypeptide reads, in one-letter code: MIRGLGIDVVELDRIEAALIRFGDRFLARILTPAERAALPPIPLTRTAGLFAAKEAAAKALGTGFAQGVAFHTLEILSDAAGRPALTLHGPALARAEALGATSWHVSISHSRDTAAAVVVLEG.

2 residues coordinate Mg(2+): Asp-8 and Glu-55.

It belongs to the P-Pant transferase superfamily. AcpS family. Mg(2+) is required as a cofactor.

It localises to the cytoplasm. It carries out the reaction apo-[ACP] + CoA = holo-[ACP] + adenosine 3',5'-bisphosphate + H(+). Its function is as follows. Transfers the 4'-phosphopantetheine moiety from coenzyme A to a Ser of acyl-carrier-protein. The chain is Holo-[acyl-carrier-protein] synthase from Solidesulfovibrio magneticus (strain ATCC 700980 / DSM 13731 / RS-1) (Desulfovibrio magneticus).